Here is a 42-residue protein sequence, read N- to C-terminus: Photosystem II reaction center protein J (42 aa).

Residues 10-30 traverse the membrane as a helical segment; it reads IPLWLVGTVAGTAALTLVAVF.

This sequence belongs to the PsbJ family. As to quaternary structure, PSII is composed of 1 copy each of membrane proteins PsbA, PsbB, PsbC, PsbD, PsbE, PsbF, PsbH, PsbI, PsbJ, PsbK, PsbL, PsbM, PsbT, PsbX, PsbY, PsbZ, Psb30/Ycf12, at least 3 peripheral proteins of the oxygen-evolving complex and a large number of cofactors. It forms dimeric complexes.

The protein localises to the plastid. It localises to the chloroplast thylakoid membrane. One of the components of the core complex of photosystem II (PSII). PSII is a light-driven water:plastoquinone oxidoreductase that uses light energy to abstract electrons from H(2)O, generating O(2) and a proton gradient subsequently used for ATP formation. It consists of a core antenna complex that captures photons, and an electron transfer chain that converts photonic excitation into a charge separation. The chain is Photosystem II reaction center protein J from Chlorella vulgaris (Green alga).